A 129-amino-acid polypeptide reads, in one-letter code: Small ribosomal subunit protein uS11 (129 aa).

It belongs to the universal ribosomal protein uS11 family. In terms of assembly, part of the 30S ribosomal subunit. Interacts with proteins S7 and S18. Binds to IF-3.

Its function is as follows. Located on the platform of the 30S subunit, it bridges several disparate RNA helices of the 16S rRNA. Forms part of the Shine-Dalgarno cleft in the 70S ribosome. This chain is Small ribosomal subunit protein uS11, found in Nitrosomonas eutropha (strain DSM 101675 / C91 / Nm57).